The chain runs to 172 residues: MENIKNPKNADDCSDSISKNSHQGVDDSLNQSRSYVCSFCIRGFSNAQALGGHMNIHRRDRAKLRQKLMEDNKDDVVAESDASEVVSLDLNEQQQQQGEALTCDDHDQYVDNDISPKQKLEFWVQESKLDTNDHGKVTEASIDGSSSSHHRDIEVLDLELRLGQSVVKKKTT.

A disordered region spans residues 1 to 28 (MENIKNPKNADDCSDSISKNSHQGVDDS). Over residues 15–28 (DSISKNSHQGVDDS) the composition is skewed to polar residues. The C2H2-type zinc-finger motif lies at 35 to 57 (YVCSFCIRGFSNAQALGGHMNIH). The EAR-like (transcriptional repression) signature appears at 156-160 (LDLEL).

As to expression, preferentially expressed in roots and flowers. Slightly expressed in leaves and stems.

It localises to the nucleus. Activation factor which mediates telomerase activity and potentiates responses to auxin through the regulation of BT2. Binds in vitro to the DNA sequence 5'-GACAGTGTTAC-3' of the BT2 promoter. This Arabidopsis thaliana (Mouse-ear cress) protein is Transcriptional regulator TAC1 (TAC1).